The following is a 228-amino-acid chain: Ribosomal RNA small subunit methyltransferase G (228 aa).

Residues Gly89, Leu94, 140 to 141 (VE), and Arg159 contribute to the S-adenosyl-L-methionine site.

The protein belongs to the methyltransferase superfamily. RNA methyltransferase RsmG family.

Its subcellular location is the cytoplasm. It carries out the reaction guanosine(527) in 16S rRNA + S-adenosyl-L-methionine = N(7)-methylguanosine(527) in 16S rRNA + S-adenosyl-L-homocysteine. Its function is as follows. Specifically methylates the N7 position of guanine in position 527 of 16S rRNA. This chain is Ribosomal RNA small subunit methyltransferase G, found in Burkholderia cenocepacia (strain HI2424).